Reading from the N-terminus, the 66-residue chain is Alpha-conotoxin-like Tx2 (66 aa).

The first 21 residues, M1 to S21, serve as a signal peptide directing secretion. Positions F22–P49 are excised as a propeptide. 2 disulfide bridges follow: C51–C57 and C52–C65. The segment at S53–P55 is ser-Xaa-Pro motif, crucial for potent interaction with nAChR.

Belongs to the conotoxin A superfamily. In terms of tissue distribution, expressed by the venom duct.

Its subcellular location is the secreted. Alpha-conotoxins act on postsynaptic membranes, they bind to the nicotinic acetylcholine receptors (nAChR) and thus inhibit them. In Conus textile (Cloth-of-gold cone), this protein is Alpha-conotoxin-like Tx2.